We begin with the raw amino-acid sequence, 190 residues long: Inosine triphosphate pyrophosphatase (190 aa).

10–15 (TGNAKK) is an ITP binding site. Glu-40 is a Mg(2+) binding site. ITP is bound by residues Lys-52, 68–69 (DT), Lys-85, 144–147 (FGWD), Lys-167, and 172–173 (HR).

This sequence belongs to the HAM1 NTPase family. As to quaternary structure, homodimer. Requires Mg(2+) as cofactor. Mn(2+) serves as cofactor.

It localises to the cytoplasm. It carries out the reaction ITP + H2O = IMP + diphosphate + H(+). The enzyme catalyses dITP + H2O = dIMP + diphosphate + H(+). It catalyses the reaction XTP + H2O = XMP + diphosphate + H(+). In terms of biological role, pyrophosphatase that hydrolyzes non-canonical purine nucleotides such as inosine triphosphate (ITP), deoxyinosine triphosphate (dITP) or xanthosine 5'-triphosphate (XTP) to their respective monophosphate derivatives. The enzyme does not distinguish between the deoxy- and ribose forms. Probably excludes non-canonical purines from RNA and DNA precursor pools, thus preventing their incorporation into RNA and DNA and avoiding chromosomal lesions. This is Inosine triphosphate pyrophosphatase from Culex quinquefasciatus (Southern house mosquito).